The following is a 374-amino-acid chain: D-amino-acid oxidase 3 (374 aa).

The first 19 residues, 1–19, serve as a signal peptide directing secretion; the sequence is MVKYDAIILGSGVLGLSIA. Residues S11, L14, K34, D35, A46, S47, and G51 each coordinate FAD. The N-linked (GlcNAc...) asparagine glycan is linked to N180. A disulfide bridge links C214 with C271. (R)-lactate contacts are provided by Y229, Y246, and R296. Anthranilate-binding residues include Y229, Y246, and R296. Residues R296, G342, G345, Y346, and Q347 each coordinate FAD. The Microbody targeting signal motif lies at 372-374; that stretch reads AKL.

It belongs to the DAMOX/DASOX family. The cofactor is FAD.

It is found in the peroxisome matrix. The enzyme catalyses a D-alpha-amino acid + O2 + H2O = a 2-oxocarboxylate + H2O2 + NH4(+). In terms of biological role, catalyzes the oxidative deamination of D-amino acids with broad substrate specificity. Enables the organism to utilize D-amino acids as a source of nutrients. Enables the organism to utilize D-asparate and D-glutamate as a nitrogen source and may also contribute to utlization of D-tryptophan, D-tyrosine and D-asparagine as a nitrogen source. Protects the organism from the toxicity of D-amino acids, including from D-glutamate. May play a role in its interaction with the host. This Cryptococcus deuterogattii (strain R265) (Cryptococcus gattii VGII (strain R265)) protein is D-amino-acid oxidase 3.